The chain runs to 291 residues: U7 snRNA-associated Sm-like protein LSm11 (291 aa).

Residues 55–84 (ARGRARGAQRGQSRGPGGKRKGRKPEPDPE) form a disordered region. The 76-residue stretch at 124–199 (SPLGELNRCV…LTLTRLFDRL (76 aa)) folds into the Sm domain. An SM region spans residues 155-289 (GFIVAFDKFW…RGENVLLVHI (135 aa)). The interval 203 to 266 (EPGSHDPAKG…RRNRKEKVDY (64 aa)) is disordered. A compositionally biased stretch (basic residues) spans 251–261 (NRPKQRRRNRK).

Belongs to the snRNP Sm proteins family. In terms of assembly, component of the heptameric ring U7 snRNP complex.

It localises to the nucleus. In terms of biological role, component of the U7 snRNP complex that is involved in the histone 3'-end pre-mRNA processing. Increases U7 snRNA levels but not histone 3'-end pre-mRNA processing activity, when overexpressed. Binds specifically to the Sm-binding site of U7 snRNA. The polypeptide is U7 snRNA-associated Sm-like protein LSm11 (Xenopus laevis (African clawed frog)).